A 347-amino-acid polypeptide reads, in one-letter code: Metacaspase-2 (347 aa).

The propeptide occupies 1–55 (MCSLITQLCDAGQLADYVGLGWLNAVSSQPYLVQALGLQPPPRRVDVDAAFRDAK). Residues 1–70 (MCSLITQLCD…QPWVATPLPG (70 aa)) form a regulates substrate access to the active site region. His-158 is a catalytic residue. Positions 173, 189, and 190 each coordinate Ca(2+). Cys-213 is a catalytic residue. Asp-220 lines the Ca(2+) pocket.

The protein belongs to the peptidase C14B family. In terms of assembly, monomer. In terms of processing, auto-proteolytic cleavage of the propeptide after Lys-55 and between the large and small subunits after Lys-268 is required for catalytic activity towards large protein substrates but is dispensable towards small oligopeptide substrates. After processing, the propeptide and the large and small subunits remain associated by non-covalent bonds. In vivo, the unprocessed enzyme appears to be the predominant form.

It localises to the recycling endosome. Activated by Ca(2+). In response to calcium binding, the 280-loop, a disordered loop consisting of residues 269-275, undergoes a conformational change which stabilizes substrates in the active site. The binding to the substrate triggers the release of the N-terminal region resulting in the activation of the enzyme. Proteolytic cleavage is required for catalytic activity towards large protein substrates. In terms of biological role, cysteine protease that cleaves specifically after arginine or lysine residues. The polypeptide is Metacaspase-2 (Trypanosoma brucei brucei (strain 927/4 GUTat10.1)).